An 894-amino-acid polypeptide reads, in one-letter code: RNA polymerase I-specific transcription initiation factor RRN6 (894 aa).

A disordered region spans residues 803–894 (PPFNLNSQSQ…KKKKRIRGFG (92 aa)). Composition is skewed to polar residues over residues 806-823 (NLNSQSQIPTIKSSQSSG), 832-849 (KTQSQKATPLSQSTQNLS), and 863-880 (QPPSSQISFVNDSQPRNS). A compositionally biased stretch (basic residues) spans 881-894 (QKAKKKKKRIRGFG).

As to quaternary structure, component of the core factor (CF) complex, which consists of RRN6, RRN7 and RRN11. The CF heterotrimer may further dimerize to form a hexamer. RRN6 interacts with RRN7, RRN11 and RRN9.

The protein resides in the cytoplasm. The protein localises to the nucleus. Its subcellular location is the nucleolus. In terms of biological role, acts as a component of the core factor (CF) complex which is essential for the initiation of rDNA transcription by RNA polymerase I. After binding of UAF (upstream activation factor) to an upstream element of the promoter, CF is recruited in a SPT15/TBP-dependent manner to form a preinitiation complex. In Saccharomyces cerevisiae (strain ATCC 204508 / S288c) (Baker's yeast), this protein is RNA polymerase I-specific transcription initiation factor RRN6 (RRN6).